The primary structure comprises 577 residues: Zona pellucida sperm-binding protein 3 receptor (577 aa).

The first 32 residues, 1 to 32 (MTAWSLHELWKTSHSTLFQVTLATVLMAPVLG), serve as a signal peptide directing secretion. Sushi domains lie at 33 to 92 (DCGP…FCAR), 93 to 154 (KRCK…ECVI), 155 to 219 (ATCE…ACEK), 220 to 279 (IVCH…TCEP), 280 to 346 (NGCI…GCER), and 347 to 412 (VCCP…SCEA). Disulfide bonds link Cys34–Cys78, Cys64–Cys90, Cys95–Cys136, Cys122–Cys152, Cys157–Cys200, Cys186–Cys217, Cys222–Cys264, Cys250–Cys277, Cys282–Cys332, Cys316–Cys344, Cys349–Cys397, and Cys382–Cys410. Residues Asn72 and Asn81 are each glycosylated (N-linked (GlcNAc...) asparagine). Asn144, Asn195, and Asn204 each carry an N-linked (GlcNAc...) asparagine glycan. A glycan (N-linked (GlcNAc...) asparagine) is linked at Asn335. Residues Asn426, Asn431, Asn434, Asn443, Asn462, Asn475, and Asn497 are each glycosylated (N-linked (GlcNAc...) asparagine). Residues 451–509 (AVCPKPEIINGNLSVEKEIYAEMENITIQCDSGYDLVGSSNIICLENRTWYPDIPFCIM) enclose the Sushi 7 domain. Disulfide bonds link Cys453-Cys494 and Cys480-Cys507.

As to quaternary structure, homomultimer; disulfide-linked. Post-translationally, glycosylated. As to expression, testis specific.

The protein resides in the cytoplasmic vesicle. It is found in the secretory vesicle. Its subcellular location is the acrosome lumen. In terms of biological role, binds to ZP3 glycoprotein in egg zona pellucida. Probably involved in interactions between sperm acrosome and egg zona pellucida during and immediately following the acrosome reaction. The polypeptide is Zona pellucida sperm-binding protein 3 receptor (Zp3r) (Rattus norvegicus (Rat)).